The chain runs to 74 residues: MDFEKKLGRLEEIVQKMEKGDLALEESLKLFEEGVKLSRECHQRLNEAESKVKLLMSVGADGQPVTTDFTSEEN.

The protein belongs to the XseB family. In terms of assembly, heterooligomer composed of large and small subunits.

It is found in the cytoplasm. The catalysed reaction is Exonucleolytic cleavage in either 5'- to 3'- or 3'- to 5'-direction to yield nucleoside 5'-phosphates.. Functionally, bidirectionally degrades single-stranded DNA into large acid-insoluble oligonucleotides, which are then degraded further into small acid-soluble oligonucleotides. The sequence is that of Exodeoxyribonuclease 7 small subunit from Bdellovibrio bacteriovorus (strain ATCC 15356 / DSM 50701 / NCIMB 9529 / HD100).